A 164-amino-acid chain; its full sequence is Neurotrophin-3 (164 aa).

The N-terminal stretch at 1–3 (IQS) is a signal peptide. Positions 4–118 (TSMDQGBLSE…GLNRTSRRKR (115 aa)) are excised as a propeptide. The interval 89–126 (LLSENTPLEPPPLYLTEEPMGLNRTSRRKRFAEGKSHR) is disordered. Residue Asn111 is glycosylated (N-linked (GlcNAc...) asparagine).

This sequence belongs to the NGF-beta family.

It is found in the secreted. Functionally, seems to promote the survival of visceral and proprioceptive sensory neurons. The protein is Neurotrophin-3 (NTF3) of Cylindrophis ruffus (Red-tailed pipe snake).